The following is a 131-amino-acid chain: Large ribosomal subunit protein eL32 (131 aa).

It belongs to the eukaryotic ribosomal protein eL32 family. Component of the large ribosomal subunit (LSU). Mature N.crassa ribosomes consist of a small (40S) and a large (60S) subunit. The 40S small subunit contains 1 molecule of ribosomal RNA (18S rRNA) and at least 32 different proteins. The large 60S subunit contains 3 rRNA molecules (26S, 5.8S and 5S rRNA) and at least 42 different proteins.

The protein localises to the cytoplasm. Functionally, component of the ribosome, a large ribonucleoprotein complex responsible for the synthesis of proteins in the cell. The small ribosomal subunit (SSU) binds messenger RNAs (mRNAs) and translates the encoded message by selecting cognate aminoacyl-transfer RNA (tRNA) molecules. The large subunit (LSU) contains the ribosomal catalytic site termed the peptidyl transferase center (PTC), which catalyzes the formation of peptide bonds, thereby polymerizing the amino acids delivered by tRNAs into a polypeptide chain. The nascent polypeptides leave the ribosome through a tunnel in the LSU and interact with protein factors that function in enzymatic processing, targeting, and the membrane insertion of nascent chains at the exit of the ribosomal tunnel. This chain is Large ribosomal subunit protein eL32 (crp-63), found in Neurospora crassa (strain ATCC 24698 / 74-OR23-1A / CBS 708.71 / DSM 1257 / FGSC 987).